We begin with the raw amino-acid sequence, 100 residues long: UPF0213 protein YhbQ (100 aa).

One can recognise a GIY-YIG domain in the interval 2-77 (TPWFLYLIRT…KQLTKRQKER (76 aa)).

Belongs to the UPF0213 family.

The protein is UPF0213 protein YhbQ of Escherichia coli O81 (strain ED1a).